The sequence spans 350 residues: 3-isopropylmalate dehydrogenase (350 aa).

76 to 87 is a binding site for NAD(+); the sequence is GPKWDNAPKRPE. Substrate-binding residues include Arg94, Arg104, Arg132, and Asp217. Mg(2+) contacts are provided by Asp217, Asp241, and Asp245. Position 275 to 287 (275 to 287) interacts with NAD(+); sequence GSAPDIANQNIAN.

It belongs to the isocitrate and isopropylmalate dehydrogenases family. LeuB type 1 subfamily. In terms of assembly, homodimer. Mg(2+) is required as a cofactor. Mn(2+) serves as cofactor.

The protein localises to the cytoplasm. The catalysed reaction is (2R,3S)-3-isopropylmalate + NAD(+) = 4-methyl-2-oxopentanoate + CO2 + NADH. The protein operates within amino-acid biosynthesis; L-leucine biosynthesis; L-leucine from 3-methyl-2-oxobutanoate: step 3/4. Catalyzes the oxidation of 3-carboxy-2-hydroxy-4-methylpentanoate (3-isopropylmalate) to 3-carboxy-4-methyl-2-oxopentanoate. The product decarboxylates to 4-methyl-2 oxopentanoate. The chain is 3-isopropylmalate dehydrogenase from Listeria monocytogenes serovar 1/2a (strain ATCC BAA-679 / EGD-e).